Here is a 1061-residue protein sequence, read N- to C-terminus: Zinc finger protein ZFPM1 (1061 aa).

The CCHC FOG-type 1 zinc finger occupies 152–185; that stretch reads VVNKDVFPCKDCGIWYRSERNLQAHLMYYCASRQ. Zn(2+)-binding residues include Cys-160, Cys-163, His-176, and Cys-181. 3 C2H2-type zinc fingers span residues 204–228, 234–256, and 262–285; these read RICP…MRSH, FVCL…LKVH, and GVCH…VTNH. 2 disordered regions span residues 349–393 and 435–455; these read PSAT…SEET and TEMS…GAAT. A compositionally biased stretch (low complexity) spans 378 to 388; it reads SPISSSSSASS. Polar residues predominate over residues 436–448; the sequence is EMSSPTPGSSPVP. The CCHC FOG-type 2 zinc-finger motif lies at 508–541; sequence SAVPKGATCFECEITFNNINNYYVHKRLYCSGRH. Cys-516, Cys-519, His-532, and Cys-537 together coordinate Zn(2+). Disordered stretches follow at residues 561 to 586 and 599 to 630; these read ALAS…ESSA and MDCE…NRTV. Residues 565-574 show a composition bias toward polar residues; it reads GFSSTEQEAS. A CCHC FOG-type 3 zinc finger spans residues 623–656; the sequence is EEDPNRTVCGACNIRFSRHETYVVHKRYYCASRH. 4 residues coordinate Zn(2+): Cys-631, Cys-634, His-647, and Cys-652. The segment at 661–681 is disordered; sequence RRREVNKPGPPYTTQPTPRTR. The interval 736 to 742 is interaction with CTBP; that stretch reads PIDLSKK. The CCHC FOG-type 4 zinc finger occupies 759 to 792; that stretch reads APLADYHECTACRISFNSLESYLAHKKFSCPTAP. Zn(2+)-binding residues include Cys-767, Cys-770, His-783, and Cys-788. The C2H2-type 4 zinc-finger motif lies at 869 to 892; sequence TTCPYCPHNVIIRGDLLEHFRSVH. A disordered region spans residues 917-1021; it reads RGQTSSASEN…MQPPKPSLIS (105 aa). Low complexity-rich tracts occupy residues 933–942 and 954–972; these read VSSASPLQLP and TTSS…STPR. Residues 973 to 984 are compositionally biased toward pro residues; sequence PLLPTSPAPPSN. The segment at 1023–1056 adopts a CCHC FOG-type 5 zinc-finger fold; it reads VPNGNHRYCRLCNIKFSSLSTFIAHKKYYCSSHA. Residues Cys-1031, Cys-1034, His-1047, and Cys-1052 each coordinate Zn(2+).

Belongs to the FOG (Friend of GATA) family. Interacts with corepressor CTBP. Interacts with the N-terminal zinc-finger of GATA1 and probably GATA2. As to expression, predominantly expressed in heart and brain. Also expressed in ventral blood island and adult spleen.

The protein resides in the nucleus. Transcription regulator that plays an central role in red blood cell differentiation. Essential cofactor that acts via the formation of a heterodimer with transcription factors of the GATA family GATA1 and GATA2. Such heterodimer can both activate or repress transcriptional activity, depending on the cell and promoter context. Acts as a repressor of red blood cells, probably by modulating activity of GATA1. The chain is Zinc finger protein ZFPM1 (zfpm1) from Xenopus laevis (African clawed frog).